We begin with the raw amino-acid sequence, 133 residues long: Exonuclease VapC9 (133 aa).

The PINc domain maps to 5–113 (YLVDASALYA…LVLVTQDREL (109 aa)). Residues aspartate 8, aspartate 92, and aspartate 110 each contribute to the Mg(2+) site.

This sequence belongs to the PINc/VapC protein family. Homodimer, 2 of which then form a homotetramer. Requires Mg(2+) as cofactor.

Inhibited by EDTA. Functionally, toxic component of a type II toxin-antitoxin (TA) system. Its function is as follows. Has ribonuclease activity. Has a slow ssDNA exonuclease activity. In Pyrobaculum aerophilum (strain ATCC 51768 / DSM 7523 / JCM 9630 / CIP 104966 / NBRC 100827 / IM2), this protein is Exonuclease VapC9.